The primary structure comprises 273 residues: 3-methyl-2-oxobutanoate hydroxymethyltransferase (273 aa).

D49 and D88 together coordinate Mg(2+). 3-methyl-2-oxobutanoate is bound by residues 49–50, D88, and K118; that span reads DS. E120 serves as a coordination point for Mg(2+). The active-site Proton acceptor is E187.

The protein belongs to the PanB family. Homodecamer; pentamer of dimers. It depends on Mg(2+) as a cofactor.

The protein localises to the cytoplasm. It carries out the reaction 3-methyl-2-oxobutanoate + (6R)-5,10-methylene-5,6,7,8-tetrahydrofolate + H2O = 2-dehydropantoate + (6S)-5,6,7,8-tetrahydrofolate. Its pathway is cofactor biosynthesis; (R)-pantothenate biosynthesis; (R)-pantoate from 3-methyl-2-oxobutanoate: step 1/2. Functionally, catalyzes the reversible reaction in which hydroxymethyl group from 5,10-methylenetetrahydrofolate is transferred onto alpha-ketoisovalerate to form ketopantoate. This is 3-methyl-2-oxobutanoate hydroxymethyltransferase from Rhizobium rhizogenes (strain K84 / ATCC BAA-868) (Agrobacterium radiobacter).